The sequence spans 356 residues: MTSPLAGMIAEHADIEKRLADPDIHNDPARARELTRRYAELATPVDLAQRLERVEGDLETAREFAEQDPSFRDEVVALEASQADLAARLRAYLVPVDPDDSRDAILEVKAGAGGEESALFAGDLLRMYLRYAERRGWRTQILDANPSDLGGYRDVSVAVKSRGTAAPGQGVFGRLRFEGGVHRVQRVPVTESAGRIHTSAAGVLVLPEAADVDIEVDPNDLRIDVFRSSGPGGQSVNTTDSAVRITHLPTGVVVSCQNEKSQLQNKESAMRILRARLLAAAREKAETAAAAARASQVRTVDRSEKVRTYNFPENRISDHRIGYKAHNLEAVLDGDLDAVIEALTEADLESRMAATP.

An N5-methylglutamine modification is found at Gln-234.

This sequence belongs to the prokaryotic/mitochondrial release factor family. In terms of processing, methylated by PrmC. Methylation increases the termination efficiency of RF1.

It is found in the cytoplasm. Functionally, peptide chain release factor 1 directs the termination of translation in response to the peptide chain termination codons UAG and UAA. This is Peptide chain release factor 1 from Parafrankia sp. (strain EAN1pec).